The primary structure comprises 390 residues: 4-hydroxy-3-methylbut-2-en-1-yl diphosphate synthase (flavodoxin) (390 aa).

Residues Cys-281, Cys-284, Cys-316, and Glu-323 each contribute to the [4Fe-4S] cluster site.

It belongs to the IspG family. It depends on [4Fe-4S] cluster as a cofactor.

It carries out the reaction (2E)-4-hydroxy-3-methylbut-2-enyl diphosphate + oxidized [flavodoxin] + H2O + 2 H(+) = 2-C-methyl-D-erythritol 2,4-cyclic diphosphate + reduced [flavodoxin]. It participates in isoprenoid biosynthesis; isopentenyl diphosphate biosynthesis via DXP pathway; isopentenyl diphosphate from 1-deoxy-D-xylulose 5-phosphate: step 5/6. Converts 2C-methyl-D-erythritol 2,4-cyclodiphosphate (ME-2,4cPP) into 1-hydroxy-2-methyl-2-(E)-butenyl 4-diphosphate. This chain is 4-hydroxy-3-methylbut-2-en-1-yl diphosphate synthase (flavodoxin), found in Salinispora tropica (strain ATCC BAA-916 / DSM 44818 / JCM 13857 / NBRC 105044 / CNB-440).